Reading from the N-terminus, the 100-residue chain is Protein RnfH (100 aa).

This sequence belongs to the UPF0125 (RnfH) family.

This is Protein RnfH from Actinobacillus succinogenes (strain ATCC 55618 / DSM 22257 / CCUG 43843 / 130Z).